We begin with the raw amino-acid sequence, 514 residues long: 2,3-bisphosphoglycerate-independent phosphoglycerate mutase (514 aa).

Residues Asp14 and Ser64 each contribute to the Mn(2+) site. Catalysis depends on Ser64, which acts as the Phosphoserine intermediate. Residues His125, 155 to 156, Arg187, Arg193, 263 to 266, and Lys336 each bind substrate; these read RD and RADR. Mn(2+) contacts are provided by Asp403, His407, Asp444, His445, and His463.

Belongs to the BPG-independent phosphoglycerate mutase family. Monomer. Mn(2+) serves as cofactor.

It carries out the reaction (2R)-2-phosphoglycerate = (2R)-3-phosphoglycerate. Its pathway is carbohydrate degradation; glycolysis; pyruvate from D-glyceraldehyde 3-phosphate: step 3/5. Its function is as follows. Catalyzes the interconversion of 2-phosphoglycerate and 3-phosphoglycerate. The chain is 2,3-bisphosphoglycerate-independent phosphoglycerate mutase from Shewanella sp. (strain MR-4).